A 330-amino-acid chain; its full sequence is MDPTTPAWGNESTTMNGNDQALPLLCGKETLIPVFLILFIALVGLVGNGFVLWLLGFCMRRNAFSVYVLSLAGADFLFLCFQLINCLVYLSNFFCSISIDFPSFFTTVMTCAYLAGLSMLSTISTERCLSVLWPIWYRCRRPRHLSAVVCVLLWALSLLLSILEGKFCGFFFSDGDSGWCQTFDFITAAWLIFLFMVLCGSSLALLVRILCGSRGLPLTRLYLTILLTVLVFLLCGLPFGIQWFLILWIWENSDVLFCHIHPVSVVLSSLNSSANPIIYFFVGTFRKQWRLQQPILKLALQRALQDTAEVDHSEGCFRQGTPEMSRSSLV.

At 1–33 (MDPTTPAWGNESTTMNGNDQALPLLCGKETLIP) the chain is on the extracellular side. Residues 34–54 (VFLILFIALVGLVGNGFVLWL) form a helical membrane-spanning segment. The Cytoplasmic portion of the chain corresponds to 55–63 (LGFCMRRNA). A helical membrane pass occupies residues 64-84 (FSVYVLSLAGADFLFLCFQLI). At 85-96 (NCLVYLSNFFCS) the chain is on the extracellular side. Residues 97 to 117 (ISIDFPSFFTTVMTCAYLAGL) form a helical membrane-spanning segment. Over 118-144 (SMLSTISTERCLSVLWPIWYRCRRPRH) the chain is Cytoplasmic. Residues 145–165 (LSAVVCVLLWALSLLLSILEG) form a helical membrane-spanning segment. Residues 166 to 184 (KFCGFFFSDGDSGWCQTFD) lie on the Extracellular side of the membrane. A helical membrane pass occupies residues 185–205 (FITAAWLIFLFMVLCGSSLAL). The Cytoplasmic segment spans residues 206 to 228 (LVRILCGSRGLPLTRLYLTILLT). The chain crosses the membrane as a helical span at residues 229–249 (VLVFLLCGLPFGIQWFLILWI). At 250–264 (WENSDVLFCHIHPVS) the chain is on the extracellular side. A helical transmembrane segment spans residues 265–285 (VVLSSLNSSANPIIYFFVGTF). The Cytoplasmic segment spans residues 286-330 (RKQWRLQQPILKLALQRALQDTAEVDHSEGCFRQGTPEMSRSSLV).

Belongs to the G-protein coupled receptor 1 family. Mas subfamily.

It localises to the cell membrane. Mast cell-specific receptor for basic secretagogues, i.e. cationic amphiphilic drugs, as well as endo- or exogenous peptides, consisting of a basic head group and a hydrophobic core. Recognizes and binds small molecules containing a cyclized tetrahydroisoquinoline (THIQ), such as non-steroidal neuromuscular blocking drugs (NMBDs), including tubocurarine and atracurium. In response to these compounds, mediates pseudo-allergic reactions characterized by histamine release, inflammation and airway contraction. This is Mas-related G-protein coupled receptor member X2 (MRGPRX2) from Pongo pygmaeus (Bornean orangutan).